Here is a 425-residue protein sequence, read N- to C-terminus: Proline iminopeptidase (425 aa).

The AB hydrolase-1 domain maps to 52–315 (PWLLYLQGGP…EFPALAWAQG (264 aa)). Catalysis depends on serine 146, which acts as the Nucleophile. Residue aspartate 351 is part of the active site. Catalysis depends on histidine 404, which acts as the Proton donor.

The protein belongs to the peptidase S33 family. Homotetramer.

Its subcellular location is the cytoplasm. The enzyme catalyses Release of N-terminal proline from a peptide.. Functionally, higher activity toward long peptides. Acts on hydroxyproline beta-naphthylamide with almost as high an activity as on proline beta-naphthylamide. The sequence is that of Proline iminopeptidase (pip) from Aeromonas sobria.